The sequence spans 648 residues: Threonine--tRNA ligase (648 aa).

One can recognise a TGS domain in the interval 1 to 63 (MAQISLTFPD…HADATIAIHT (63 aa)). The interval 247–544 (DHRKLGREMD…LIENSAGKLP (298 aa)) is catalytic. 3 residues coordinate Zn(2+): C344, H395, and H521.

Belongs to the class-II aminoacyl-tRNA synthetase family. As to quaternary structure, homodimer. Zn(2+) serves as cofactor.

It localises to the cytoplasm. The enzyme catalyses tRNA(Thr) + L-threonine + ATP = L-threonyl-tRNA(Thr) + AMP + diphosphate + H(+). Functionally, catalyzes the attachment of threonine to tRNA(Thr) in a two-step reaction: L-threonine is first activated by ATP to form Thr-AMP and then transferred to the acceptor end of tRNA(Thr). Also edits incorrectly charged L-seryl-tRNA(Thr). The polypeptide is Threonine--tRNA ligase (Roseobacter denitrificans (strain ATCC 33942 / OCh 114) (Erythrobacter sp. (strain OCh 114))).